Here is a 147-residue protein sequence, read N- to C-terminus: Hemoglobin subunit beta (147 aa).

A Globin domain is found at 3 to 147 (HWTAEEKQLI…VAHALARKYH (145 aa)). Residues histidine 64 and histidine 93 each coordinate heme b.

It belongs to the globin family. In terms of assembly, heterotetramer of 2 alpha (or alpha-D) and 2 beta chains. In terms of tissue distribution, red blood cells.

Involved in oxygen transport from the lung to the various peripheral tissues. The beta chain is a component of adult hemoglobin A and D. The chain is Hemoglobin subunit beta (HBB) from Gallus gallus (Chicken).